Here is a 73-residue protein sequence, read N- to C-terminus: Protein SlyX homolog (73 aa).

The protein belongs to the SlyX family.

The chain is Protein SlyX homolog from Pasteurella multocida (strain Pm70).